Consider the following 616-residue polypeptide: MASSSTLANDDWKQGLAAPPKDLRPQTEDVTATQGSRFEDFGLRRELLMGIYTAGFERPSPIQEQAIPMALTGRDILARAKNGTGKTASFIIPTLNRINTSLSHIQALILVPTRELALQTSQVCKTLGAHIPNLQVMITTGGTTLRDDILRLQQPVHILVGTPGRILDLGSKGIAGLNKCGIFVMDEADKLLSEDFMPVIEQTLALCPQERQVMLFSATFPWTVKEFKDQHMVQPYEINLMDELTLKGVTQYYAYVEESQKVHCLNTLFSKLQINQSIIFCNSTNRVELLAKKVTELGYSCFYSHAKMQQAHRNRVFHDFRNGMTRNLVCSDLLTRGIDIQAVNVVINFDFPRTAESYLHRIGRSGRFGHLGLAISLLTLEDRHNLYRIESELGTEIAPIPAVIDPVLYVAPAMVEEERESPPPKPAAIAAPPAQQQPQQRQRQHPPVPSHQVAHHSPAAAPIQQQQQQQQQQQQPQYQLAYGQGPPQPQVPFQQANSSPAPAPLPSYPQQAPTQAQGPAQMQSPPSEPATQPQASAQIPVQGQTPPIQPRAQQQGQQQPSQPGQAEGQSQPNRRPNTGGFRGNGRGQGHRGRGRGRGGQPGHPGAGASQSQQAQA.

The disordered stretch occupies residues 1-35 (MASSSTLANDDWKQGLAAPPKDLRPQTEDVTATQG). The short motif at 36–64 (SRFEDFGLRRELLMGIYTAGFERPSPIQE) is the Q motif element. One can recognise a Helicase ATP-binding domain in the interval 67 to 238 (IPMALTGRDI…DQHMVQPYEI (172 aa)). 80-87 (AKNGTGKT) is a binding site for ATP. Residues 186–189 (DEAD) carry the DEAD box motif. The region spanning 248-408 (GVTQYYAYVE…PIPAVIDPVL (161 aa)) is the Helicase C-terminal domain. A disordered region spans residues 416–616 (EEERESPPPK…GASQSQQAQA (201 aa)). Composition is skewed to low complexity over residues 427 to 441 (AAIAAPPAQQQPQQR), 458 to 500 (PAAA…NSSP), and 508 to 523 (YPQQAPTQAQGPAQMQ). Positions 529-545 (PATQPQASAQIPVQGQT) are enriched in polar residues. Composition is skewed to low complexity over residues 550–579 (PRAQQQGQQQPSQPGQAEGQSQPNRRPNTG) and 606–616 (AGASQSQQAQA).

This sequence belongs to the DEAD box helicase family. DDX6/DHH1 subfamily.

Its subcellular location is the cytoplasm. The protein resides in the P-body. The enzyme catalyses ATP + H2O = ADP + phosphate + H(+). In terms of biological role, ATP-dependent RNA helicase involved in mRNA turnover, and more specifically in mRNA decapping. Is involved in G1/S DNA-damage checkpoint recovery, probably through the regulation of the translational status of a subset of mRNAs. May also have a role in translation and mRNA nuclear export. Blocks autophagy in nutrient-rich conditions by, at least partly, binding and repressing the expression of a set of ATG genes, including ATG3, ATG7, ATG8, ATG19, ATG20 and ATG22. VAD1-mediated repression of autophagy is regulated by TOR-dependent phosphorylation of the decapping enzyme DCP2. Regulates multiple virulence-associated genes. Repression of autophagy by VAD1 also regulates the pathogenesis. This Cryptococcus neoformans var. grubii serotype A (strain H99 / ATCC 208821 / CBS 10515 / FGSC 9487) (Filobasidiella neoformans var. grubii) protein is ATP-dependent RNA helicase VAD1.